The chain runs to 183 residues: NADH-quinone oxidoreductase subunit I (183 aa).

2 consecutive 4Fe-4S ferredoxin-type domains span residues 71-100 and 117-146; these read KRDE…MKAA and EIYE…LTTS. [4Fe-4S] cluster contacts are provided by Cys80, Cys83, Cys86, Cys90, Cys126, Cys129, Cys132, and Cys136.

The protein belongs to the complex I 23 kDa subunit family. NDH-1 is composed of 14 different subunits. Subunits NuoA, H, J, K, L, M, N constitute the membrane sector of the complex. [4Fe-4S] cluster serves as cofactor.

The protein resides in the cell inner membrane. It catalyses the reaction a quinone + NADH + 5 H(+)(in) = a quinol + NAD(+) + 4 H(+)(out). In terms of biological role, NDH-1 shuttles electrons from NADH, via FMN and iron-sulfur (Fe-S) centers, to quinones in the respiratory chain. The immediate electron acceptor for the enzyme in this species is believed to be ubiquinone. Couples the redox reaction to proton translocation (for every two electrons transferred, four hydrogen ions are translocated across the cytoplasmic membrane), and thus conserves the redox energy in a proton gradient. This Flavobacterium psychrophilum (strain ATCC 49511 / DSM 21280 / CIP 103535 / JIP02/86) protein is NADH-quinone oxidoreductase subunit I.